Reading from the N-terminus, the 231-residue chain is NADH-ubiquinone oxidoreductase chain 4 (231 aa).

6 helical membrane-spanning segments follow: residues Pro1 to Ile21, Met34 to Leu54, Ser61 to Ile80, Gly85 to Ala107, Ile128 to Pro148, and Thr169 to Leu189.

It belongs to the complex I subunit 4 family.

The protein resides in the mitochondrion membrane. The enzyme catalyses a ubiquinone + NADH + 5 H(+)(in) = a ubiquinol + NAD(+) + 4 H(+)(out). Core subunit of the mitochondrial membrane respiratory chain NADH dehydrogenase (Complex I) that is believed to belong to the minimal assembly required for catalysis. Complex I functions in the transfer of electrons from NADH to the respiratory chain. The immediate electron acceptor for the enzyme is believed to be ubiquinone. This Gloydius blomhoffii (Mamushi) protein is NADH-ubiquinone oxidoreductase chain 4 (MT-ND4).